Here is a 357-residue protein sequence, read N- to C-terminus: Neuronal-specific septin-3 (357 aa).

The segment covering 1–10 (MSKGLPETRT) has biased composition (basic and acidic residues). Residues 1–29 (MSKGLPETRTDAAMSELVPEPRPKPAVPM) form a disordered region. Residues 58-330 (TGFDFNIMVV…ETYRAKRLND (273 aa)) enclose the Septin-type G domain. Residues 68–75 (GQSGLGKS) are G1 motif. 68–75 (GQSGLGKS) lines the GTP pocket. Ser91 bears the Phosphoserine mark. Residue Thr102 coordinates GTP. Residues 125–128 (DTPG) form a G3 motif region. A G4 motif region spans residues 207–210 (AKAD). Residues 208–216 (KADTMTLEE), Gly264, and Arg279 each bind GTP.

It belongs to the TRAFAC class TrmE-Era-EngA-EngB-Septin-like GTPase superfamily. Septin GTPase family. Septins polymerize into heterooligomeric protein complexes that form filaments, and can associate with cellular membranes, actin filaments and microtubules. GTPase activity is required for filament formation. In terms of processing, phosphorylated by PKG on serine residues. Phosphorylated by PKG on Ser-91.

It is found in the cytoplasm. The protein localises to the cytoskeleton. The protein resides in the synapse. Its function is as follows. Filament-forming cytoskeletal GTPase. May play a role in cytokinesis (Potential). The chain is Neuronal-specific septin-3 from Bos taurus (Bovine).